Here is a 172-residue protein sequence, read N- to C-terminus: Peptide methionine sulfoxide reductase MsrA (172 aa).

Cys-14 is a catalytic residue.

Belongs to the MsrA Met sulfoxide reductase family.

It carries out the reaction L-methionyl-[protein] + [thioredoxin]-disulfide + H2O = L-methionyl-(S)-S-oxide-[protein] + [thioredoxin]-dithiol. The catalysed reaction is [thioredoxin]-disulfide + L-methionine + H2O = L-methionine (S)-S-oxide + [thioredoxin]-dithiol. Functionally, has an important function as a repair enzyme for proteins that have been inactivated by oxidation. Catalyzes the reversible oxidation-reduction of methionine sulfoxide in proteins to methionine. The protein is Peptide methionine sulfoxide reductase MsrA of Streptomyces coelicolor (strain ATCC BAA-471 / A3(2) / M145).